A 421-amino-acid chain; its full sequence is 3-isopropylmalate dehydratase large subunit (421 aa).

The [4Fe-4S] cluster site is built by Cys292, Cys352, and Cys355.

The protein belongs to the aconitase/IPM isomerase family. LeuC type 2 subfamily. In terms of assembly, heterodimer of LeuC and LeuD. The cofactor is [4Fe-4S] cluster.

The enzyme catalyses (2R,3S)-3-isopropylmalate = (2S)-2-isopropylmalate. It participates in amino-acid biosynthesis; L-leucine biosynthesis; L-leucine from 3-methyl-2-oxobutanoate: step 2/4. Catalyzes the isomerization between 2-isopropylmalate and 3-isopropylmalate, via the formation of 2-isopropylmaleate. The polypeptide is 3-isopropylmalate dehydratase large subunit (Herpetosiphon aurantiacus (strain ATCC 23779 / DSM 785 / 114-95)).